Here is a 214-residue protein sequence, read N- to C-terminus: MGRRPARCYRYCKNKPYPKSRFCRGVPDAKIRIFDLGRKKAKVDEFPLCGHMVSDEYEQLSSEALEAARICANKYMVKSCGKDGFHIRVRLHPFHVIRINKMLSCAGADRLQTGMRGAFGKPQGTVARVHIGQVIMSIRTKLQNKEHVIEALRRAKFKFPGRQKIHISKKWGFTKFNADEFEDKVAKKRLIPDGCGVKYVPNRGPLDKWRALHS.

The protein belongs to the universal ribosomal protein uL16 family. Component of the 60S large ribosomal subunit (LSU).

The protein localises to the cytoplasm. Functionally, testis-specific component of the ribosome, which is required for the transition from prophase to metaphase in male meiosis I. Compensates for the inactivated X-linked RPL10 paralog during spermatogenesis. The ribosome is a large ribonucleoprotein complex responsible for the synthesis of proteins in the cell. The small ribosomal subunit (SSU) binds messenger RNAs (mRNAs) and translates the encoded message by selecting cognate aminoacyl-transfer RNA (tRNA) molecules. The large subunit (LSU) contains the ribosomal catalytic site termed the peptidyl transferase center (PTC), which catalyzes the formation of peptide bonds, thereby polymerizing the amino acids delivered by tRNAs into a polypeptide chain. The nascent polypeptides leave the ribosome through a tunnel in the LSU and interact with protein factors that function in enzymatic processing, targeting, and the membrane insertion of nascent chains at the exit of the ribosomal tunnel. This Bos taurus (Bovine) protein is Large ribosomal subunit protein uL16-like (RPL10L).